Reading from the N-terminus, the 887-residue chain is Phosphatidylinositol 3-kinase catalytic subunit type 3 (887 aa).

Positions 35 to 184 (YKAVLEDPML…LAKLTKAHRQ (150 aa)) constitute a C2 PI3K-type domain. The disordered stretch occupies residues 149–170 (VEADGSEPTRTPGRTSSTLSED). Residues 156-170 (PTRTPGRTSSTLSED) are compositionally biased toward polar residues. A Phosphothreonine; by AMPK modification is found at threonine 163. Serine 165 is modified (phosphoserine; by AMPK). Serine 244, serine 261, and serine 282 each carry phosphoserine. In terms of domain architecture, PIK helical spans 283 to 520 (DHDLKPNATT…PKTHEMYLNV (238 aa)). A disordered region spans residues 416 to 467 (EPTKKDSQASVSESLSSSGVSSADIDSSQIITNPLPPVASPPPASKSKEVSD). Over residues 423 to 444 (QASVSESLSSSGVSSADIDSSQ) the composition is skewed to low complexity. Residues 449–459 (PLPPVASPPPA) show a composition bias toward pro residues. The PI3K/PI4K catalytic domain maps to 605–871 (IPETATLFKS…LIDESVHALF (267 aa)). Positions 611 to 617 (LFKSALM) are G-loop. Residues 740–748 (GVGDRHLDN) form a catalytic loop region. The interval 759–780 (HIDFGYILGRDPKPLPPPMKLN) is activation loop.

Belongs to the PI3/PI4-kinase family. Component of the PI3K (PI3KC3/PI3K-III/class III phosphatidylinositol 3-kinase) complex the core of which is composed of the catalytic subunit PIK3C3, the regulatory subunit PIK3R4 and BECN1 associating with additional regulatory/auxiliary subunits to form alternative complex forms. Alternative complex forms containing a fourth regulatory subunit in a mutually exclusive manner are: the PI3K complex I (PI3KC3-C1) containing ATG14, and the PI3K complex II (PI3KC3-C2) containing UVRAG. PI3KC3-C1 displays a V-shaped architecture with PIK3R4 serving as a bridge between PIK3C3 and the ATG14:BECN1 subcomplex. Both, PI3KC3-C1 and PI3KC3-C2, can associate with further regulatory subunits such as RUBCN, SH3GLB1/Bif-1 and AMBRA1. PI3KC3-C1 probably associates with PIK3CB. Interacts with RAB7A in the presence of PIK3R4. Interacts with AMBRA1. Interacts with BECN1P1/BECN2. Interacts with SLAMF1. May interact with DYN2. May be a component of a complex composed of RAB5A (in GDP-bound form), DYN2 and PIK3C3. Interacts with NCKAP1L. Interacts with ATG14; this interaction is increased in the absence of TMEM39A. Interacts with STEEP1; the interaction is STING1-dependent and required for trafficking of STING1 from the endoplasmic reticulum. Interacts with YWHAG. Interacts with ARMC3. Mn(2+) is required as a cofactor. In terms of processing, ubiquitinated via 'Lys-29'- and 'Lys-48'-linked ubiquitination by UBE3C, promoting its degradation. Deubiquitination by ZRANB1/TRABID promotes its stabilization, leading to autophagosome maturation.

The protein resides in the midbody. It localises to the late endosome. It is found in the cytoplasmic vesicle. The protein localises to the autophagosome. The enzyme catalyses a 1,2-diacyl-sn-glycero-3-phospho-(1D-myo-inositol) + ATP = a 1,2-diacyl-sn-glycero-3-phospho-(1D-myo-inositol-3-phosphate) + ADP + H(+). In terms of biological role, catalytic subunit of the PI3K complex that mediates formation of phosphatidylinositol 3-phosphate; different complex forms are believed to play a role in multiple membrane trafficking pathways: PI3KC3-C1 is involved in initiation of autophagosomes and PI3KC3-C2 in maturation of autophagosomes and endocytosis. As part of PI3KC3-C1, promotes endoplasmic reticulum membrane curvature formation prior to vesicle budding. Involved in regulation of degradative endocytic trafficking and required for the abscission step in cytokinesis, probably in the context of PI3KC3-C2. Involved in the transport of lysosomal enzyme precursors to lysosomes. Required for transport from early to late endosomes. The sequence is that of Phosphatidylinositol 3-kinase catalytic subunit type 3 from Rattus norvegicus (Rat).